The sequence spans 426 residues: DNA polymerase processivity factor component OPG148 (426 aa).

The protein belongs to the orthopoxvirus OPG148 family. As to quaternary structure, interacts with the DNA polymerase catalytic subunit OPG071. Interacts with UDG/OPG116. Component of the uracil-DNA glycosylase(UDG)-OPG148-polymerase complex; OPG148 and UDG form a heterodimeric processivity factor that associates with OPG071 to form the processive polymerase holoenzyme. Interacts with OPG117.

Its function is as follows. Plays an essential role in viral DNA replication by acting as the polymerase processivity factor together with protein OPG116. Serves as a bridge which links the DNA polymerase OPG071 and the uracil DNA glycosylase. The sequence is that of DNA polymerase processivity factor component OPG148 (OPG148) from Cynomys gunnisoni (Gunnison's prairie dog).